Reading from the N-terminus, the 265-residue chain is GTP cyclohydrolase FolE2 (265 aa).

It belongs to the GTP cyclohydrolase IV family.

The catalysed reaction is GTP + H2O = 7,8-dihydroneopterin 3'-triphosphate + formate + H(+). Its pathway is cofactor biosynthesis; 7,8-dihydroneopterin triphosphate biosynthesis; 7,8-dihydroneopterin triphosphate from GTP: step 1/1. In terms of biological role, converts GTP to 7,8-dihydroneopterin triphosphate. The polypeptide is GTP cyclohydrolase FolE2 (Bordetella petrii (strain ATCC BAA-461 / DSM 12804 / CCUG 43448)).